The following is a 293-amino-acid chain: 4-hydroxy-tetrahydrodipicolinate synthase 1 (293 aa).

A pyruvate-binding site is contributed by threonine 46. Catalysis depends on tyrosine 134, which acts as the Proton donor/acceptor. Residue lysine 162 is the Schiff-base intermediate with substrate of the active site. Position 204 (isoleucine 204) interacts with pyruvate.

It belongs to the DapA family. Homotetramer; dimer of dimers.

The protein resides in the cytoplasm. The catalysed reaction is L-aspartate 4-semialdehyde + pyruvate = (2S,4S)-4-hydroxy-2,3,4,5-tetrahydrodipicolinate + H2O + H(+). The protein operates within amino-acid biosynthesis; L-lysine biosynthesis via DAP pathway; (S)-tetrahydrodipicolinate from L-aspartate: step 3/4. In terms of biological role, catalyzes the condensation of (S)-aspartate-beta-semialdehyde [(S)-ASA] and pyruvate to 4-hydroxy-tetrahydrodipicolinate (HTPA). This chain is 4-hydroxy-tetrahydrodipicolinate synthase 1, found in Clostridium acetobutylicum (strain ATCC 824 / DSM 792 / JCM 1419 / IAM 19013 / LMG 5710 / NBRC 13948 / NRRL B-527 / VKM B-1787 / 2291 / W).